The following is a 289-amino-acid chain: tRNA dimethylallyltransferase (289 aa).

Residue 9–16 (GTTASGKT) participates in ATP binding. 11–16 (TASGKT) serves as a coordination point for substrate. An interaction with substrate tRNA region spans residues 34–37 (DSLC).

This sequence belongs to the IPP transferase family. As to quaternary structure, monomer. Mg(2+) serves as cofactor.

The enzyme catalyses adenosine(37) in tRNA + dimethylallyl diphosphate = N(6)-dimethylallyladenosine(37) in tRNA + diphosphate. Catalyzes the transfer of a dimethylallyl group onto the adenine at position 37 in tRNAs that read codons beginning with uridine, leading to the formation of N6-(dimethylallyl)adenosine (i(6)A). The protein is tRNA dimethylallyltransferase of Campylobacter jejuni subsp. doylei (strain ATCC BAA-1458 / RM4099 / 269.97).